Here is a 316-residue protein sequence, read N- to C-terminus: Retinol dehydrogenase 12 (316 aa).

Position 46-52 (46-52 (GANTGIG)) interacts with NADP(+). Serine 175 is a substrate binding site. The active-site Proton acceptor is the tyrosine 200.

The protein belongs to the short-chain dehydrogenases/reductases (SDR) family. As to expression, expressed in the retina.

The catalysed reaction is all-trans-retinol + NADP(+) = all-trans-retinal + NADPH + H(+). It catalyses the reaction 11-cis-retinol + NADP(+) = 11-cis-retinal + NADPH + H(+). The enzyme catalyses 9-cis-retinol + NADP(+) = 9-cis-retinal + NADPH + H(+). It carries out the reaction a 4-hydroxynonen-1-ol + NADP(+) = a 4-hydroxynonenal + NADPH + H(+). The catalysed reaction is (E)-non-2-en-1-ol + NADP(+) = (E)-non-2-enal + NADPH + H(+). It catalyses the reaction (Z)-non-6-en-1-ol + NADP(+) = (Z)-non-6-enal + NADPH + H(+). The enzyme catalyses nonan-1-ol + NADP(+) = nonanal + NADPH + H(+). It functions in the pathway cofactor metabolism; retinol metabolism. In terms of biological role, retinoids dehydrogenase/reductase with a clear preference for NADP. Displays high activity towards 9-cis, 11-cis and all-trans-retinal. Shows very weak activity towards 13-cis-retinol. Also exhibits activity, albeit with lower affinity than for retinaldehydes, towards lipid peroxidation products (C9 aldehydes) such as 4-hydroxynonenal and trans-2-nonenal. May play an important function in photoreceptor cells to detoxify 4-hydroxynonenal and potentially other toxic aldehyde products resulting from lipid peroxidation. Has no dehydrogenase activity towards steroids. The sequence is that of Retinol dehydrogenase 12 (RDH12) from Bos taurus (Bovine).